A 93-amino-acid chain; its full sequence is Alpha-defensin 23 (93 aa).

The signal sequence occupies residues 1 to 19 (MKTLVLLSALILLAFQVQA). The propeptide occupies 20 to 58 (DPIQNTDEETKTEEQPGKEDQAVSVSFGDPEGSSLQEES). The tract at residues 24 to 54 (NTDEETKTEEQPGKEDQAVSVSFGDPEGSSL) is disordered. The span at 27–40 (EETKTEEQPGKEDQ) shows a compositional bias: basic and acidic residues. 3 disulfide bridges follow: Cys64-Cys92, Cys66-Cys81, and Cys71-Cys91.

It belongs to the alpha-defensin family.

It localises to the secreted. Functionally, may have microbicidal activities. This Mus musculus (Mouse) protein is Alpha-defensin 23 (Defa23).